Here is a 239-residue protein sequence, read N- to C-terminus: LexA repressor (239 aa).

The H-T-H motif DNA-binding region spans 26 to 46; that stretch reads FDEMKEALDLASKSGIHRLIT. Residues 90-110 are disordered; it reads GSLGKTPPPPARPAPVATNDD. Active-site for autocatalytic cleavage activity residues include S160 and K198.

It belongs to the peptidase S24 family. In terms of assembly, homodimer.

It carries out the reaction Hydrolysis of Ala-|-Gly bond in repressor LexA.. Its function is as follows. Represses a number of genes involved in the response to DNA damage (SOS response), including recA and lexA. In the presence of single-stranded DNA, RecA interacts with LexA causing an autocatalytic cleavage which disrupts the DNA-binding part of LexA, leading to derepression of the SOS regulon and eventually DNA repair. This Brucella anthropi (strain ATCC 49188 / DSM 6882 / CCUG 24695 / JCM 21032 / LMG 3331 / NBRC 15819 / NCTC 12168 / Alc 37) (Ochrobactrum anthropi) protein is LexA repressor.